The primary structure comprises 915 residues: MNYKDTLLMPKTDFPMRGGLPKKEPEIQKQWDEQDLYHKILEKNKGHESYILHDGPPYANGNLHMGHALNKILKDFIVRYKSMQGYYSPYVPGWDTHGLPIEQALTKKGVKRKEMPISEFRKLCEEFALEQIDIQKKDFKRLGVNGDFNDPYITLKPEYEAAQIRLFGEMADRGLIYKGKKPVYWSPSSESSLAEAEIEYHDKRSPSIYVAFDVKDGKGVVDEDAKFIIWTTTPWTLPSNVAITVHPDLKYGQYNVNGEKYVVGQDLVEEVAEELGWDKEDIQLEKEFTGKELEYVETQHPFIDRVSLVINGLHVTTDAGTGAVHTAPGHGEDDYIVGQKYNLPVISPLNDKGVFTEEGGQFEGMFYDKANKAVTDLLKENGSLLKLKFITHSYPHDWRTKKPVIFRATPQWFASISKVRQDILDAIEDTNFKVDWGKTRIYNMIRDRGEWVISRQRVWGVPLPVFYTENGDIIMDKEVIYHVANLFEKYGSNVWFDRDAKDLLPEGFTHPGSPNGEFTKEEDIMDVWFDSGSSHRGVLETRPELSFPADLYLEGSDQYRGWFNSSITTAVATRGQSPYKFLLSHGFVMDGEGKKMSKSLGNVIVPDQIVKQKGADIARLWVSSVDYLSDVRISDEILKQTADVYRKIRNTLRFMLGNVNDFNPETDAVPESDLLEVDRYLLNRLREFTESIINHYDNFDYLNIYQEVQNFINVELSNFYLDYGKDILYIEKQDSHKRRSMQTVLYQILVDMTKLLAPILAHTSEEVWSYIPHVKEESVHLADMPEVVKPDEELLEKWNTFMKLRDDVNRALEEARNNKVIGKSLEAKVIIGSNESFDAADFLKDFENLHQLFIVSQVEVEEKVEDGNEYYYGDIKVVHADGEKCERCWNYSTELGSVNGLDHLCPRCQGVVADL.

A 'HIGH' region motif is present at residues 57–67 (PYANGNLHMGH). Residue Glu-554 participates in L-isoleucyl-5'-AMP binding. A 'KMSKS' region motif is present at residues 595–599 (KMSKS). ATP is bound at residue Lys-598. Zn(2+) contacts are provided by Cys-885, Cys-888, Cys-905, and Cys-908.

The protein belongs to the class-I aminoacyl-tRNA synthetase family. IleS type 1 subfamily. As to quaternary structure, monomer. It depends on Zn(2+) as a cofactor.

It is found in the cytoplasm. The enzyme catalyses tRNA(Ile) + L-isoleucine + ATP = L-isoleucyl-tRNA(Ile) + AMP + diphosphate. Its function is as follows. Catalyzes the attachment of isoleucine to tRNA(Ile). As IleRS can inadvertently accommodate and process structurally similar amino acids such as valine, to avoid such errors it has two additional distinct tRNA(Ile)-dependent editing activities. One activity is designated as 'pretransfer' editing and involves the hydrolysis of activated Val-AMP. The other activity is designated 'posttransfer' editing and involves deacylation of mischarged Val-tRNA(Ile). The chain is Isoleucine--tRNA ligase from Staphylococcus carnosus (strain TM300).